The primary structure comprises 77 residues: MSKNIYCVFLRKQAEGQDFQSYPGELGKHIFNNISKEAWAKWQQKQTMLINENKLNLISNTDRNFLEKEMIKFLFKS.

Belongs to the Fe(2+)-trafficking protein family.

Functionally, could be a mediator in iron transactions between iron acquisition and iron-requiring processes, such as synthesis and/or repair of Fe-S clusters in biosynthetic enzymes. The protein is Probable Fe(2+)-trafficking protein of Baumannia cicadellinicola subsp. Homalodisca coagulata.